A 177-amino-acid chain; its full sequence is Isopentenyl-diphosphate Delta-isomerase 1 (177 aa).

Residues histidine 24 and histidine 30 each contribute to the Mn(2+) site. In terms of domain architecture, Nudix hydrolase spans 28 to 160 (SLHRAISIFI…PHAYSFWLEA (133 aa)). Residue cysteine 65 is part of the active site. Cysteine 65 is a binding site for Mg(2+). Residue histidine 67 participates in Mn(2+) binding. Glutamate 85 contacts Mg(2+). Mn(2+) is bound by residues glutamate 110 and glutamate 112. Glutamate 112 is an active-site residue.

It belongs to the IPP isomerase type 1 family. The cofactor is Mg(2+). Mn(2+) serves as cofactor.

Its subcellular location is the cytoplasm. The catalysed reaction is isopentenyl diphosphate = dimethylallyl diphosphate. The protein operates within isoprenoid biosynthesis; dimethylallyl diphosphate biosynthesis; dimethylallyl diphosphate from isopentenyl diphosphate: step 1/1. In terms of biological role, catalyzes the 1,3-allylic rearrangement of the homoallylic substrate isopentenyl (IPP) to its highly electrophilic allylic isomer, dimethylallyl diphosphate (DMAPP). The chain is Isopentenyl-diphosphate Delta-isomerase 1 from Aromatoleum aromaticum (strain DSM 19018 / LMG 30748 / EbN1) (Azoarcus sp. (strain EbN1)).